The sequence spans 306 residues: tRNA dimethylallyltransferase (306 aa).

An ATP-binding site is contributed by 9 to 16 (GPTAIGKT). 11–16 (TAIGKT) contacts substrate. Residues 34–37 (DSMQ) form an interaction with substrate tRNA region.

The protein belongs to the IPP transferase family. As to quaternary structure, monomer. Mg(2+) is required as a cofactor.

It carries out the reaction adenosine(37) in tRNA + dimethylallyl diphosphate = N(6)-dimethylallyladenosine(37) in tRNA + diphosphate. In terms of biological role, catalyzes the transfer of a dimethylallyl group onto the adenine at position 37 in tRNAs that read codons beginning with uridine, leading to the formation of N6-(dimethylallyl)adenosine (i(6)A). The chain is tRNA dimethylallyltransferase from Lactobacillus helveticus (strain DPC 4571).